The sequence spans 770 residues: Molybdenum cofactor sulfurase (770 aa).

K231 carries the N6-(pyridoxal phosphate)lysine modification. C395 is an active-site residue. The 170-residue stretch at 601 to 770 folds into the MOSC domain; it reads DWVSRALGVS…TVSGVIEESE (170 aa).

The protein belongs to the class-V pyridoxal-phosphate-dependent aminotransferase family. MOCOS subfamily. The cofactor is pyridoxal 5'-phosphate.

It carries out the reaction Mo-molybdopterin + L-cysteine + AH2 = thio-Mo-molybdopterin + L-alanine + A + H2O. In terms of biological role, sulfurates the molybdenum cofactor. Sulfation of molybdenum is essential for xanthine dehydrogenase (XDH) and aldehyde oxidase (ADO) enzymes in which molybdenum cofactor is liganded by 1 oxygen and 1 sulfur atom in active form. The chain is Molybdenum cofactor sulfurase from Anopheles gambiae (African malaria mosquito).